We begin with the raw amino-acid sequence, 359 residues long: Holliday junction branch migration complex subunit RuvB (359 aa).

Positions methionine 1–asparagine 10 are enriched in basic and acidic residues. The segment at methionine 1–aspartate 20 is disordered. The segment at histidine 4 to tyrosine 188 is large ATPase domain (RuvB-L). ATP is bound by residues leucine 27, arginine 28, glycine 69, lysine 72, threonine 73, threonine 74, glutamate 135–phenylalanine 137, arginine 178, tyrosine 188, and arginine 225. Mg(2+) is bound at residue threonine 73. Residues threonine 189 to glutamate 259 form a small ATPAse domain (RuvB-S) region. Positions serine 262 to glutamate 359 are head domain (RuvB-H). DNA is bound by residues arginine 298, arginine 317, and arginine 322.

The protein belongs to the RuvB family. As to quaternary structure, homohexamer. Forms an RuvA(8)-RuvB(12)-Holliday junction (HJ) complex. HJ DNA is sandwiched between 2 RuvA tetramers; dsDNA enters through RuvA and exits via RuvB. An RuvB hexamer assembles on each DNA strand where it exits the tetramer. Each RuvB hexamer is contacted by two RuvA subunits (via domain III) on 2 adjacent RuvB subunits; this complex drives branch migration. In the full resolvosome a probable DNA-RuvA(4)-RuvB(12)-RuvC(2) complex forms which resolves the HJ.

The protein localises to the cytoplasm. The enzyme catalyses ATP + H2O = ADP + phosphate + H(+). Functionally, the RuvA-RuvB-RuvC complex processes Holliday junction (HJ) DNA during genetic recombination and DNA repair, while the RuvA-RuvB complex plays an important role in the rescue of blocked DNA replication forks via replication fork reversal (RFR). RuvA specifically binds to HJ cruciform DNA, conferring on it an open structure. The RuvB hexamer acts as an ATP-dependent pump, pulling dsDNA into and through the RuvAB complex. RuvB forms 2 homohexamers on either side of HJ DNA bound by 1 or 2 RuvA tetramers; 4 subunits per hexamer contact DNA at a time. Coordinated motions by a converter formed by DNA-disengaged RuvB subunits stimulates ATP hydrolysis and nucleotide exchange. Immobilization of the converter enables RuvB to convert the ATP-contained energy into a lever motion, pulling 2 nucleotides of DNA out of the RuvA tetramer per ATP hydrolyzed, thus driving DNA branch migration. The RuvB motors rotate together with the DNA substrate, which together with the progressing nucleotide cycle form the mechanistic basis for DNA recombination by continuous HJ branch migration. Branch migration allows RuvC to scan DNA until it finds its consensus sequence, where it cleaves and resolves cruciform DNA. This Granulibacter bethesdensis (strain ATCC BAA-1260 / CGDNIH1) protein is Holliday junction branch migration complex subunit RuvB.